Here is a 102-residue protein sequence, read N- to C-terminus: Turripeptide OL55-like (102 aa).

Post-translationally, contains 8 disulfide bonds. In terms of tissue distribution, expressed by the venom duct.

The protein localises to the secreted. Functionally, acts as a neurotoxin by inhibiting an ion channel. This Lophiotoma acuta (Marbled turris) protein is Turripeptide OL55-like.